Reading from the N-terminus, the 684-residue chain is Histamine oxidase (684 aa).

316–327 (YFDSGEYLVGRD) contacts substrate. Catalysis depends on aspartate 318, which acts as the Proton acceptor. An intrachain disulfide couples cysteine 337 to cysteine 363. A substrate-binding site is contributed by 399-404 (VGNYDY). The active-site Schiff-base intermediate with substrate; via topaquinone is tyrosine 402. Tyrosine 402 carries the post-translational modification 2',4',5'-topaquinone. Residues histidine 451 and histidine 453 each coordinate Cu cation. Ca(2+) contacts are provided by aspartate 460, glutamate 500, tyrosine 590, and aspartate 601. Aspartate 460 provides a ligand contact to Mn(2+). A Mn(2+)-binding site is contributed by aspartate 601. Residue histidine 612 coordinates Cu cation. The tract at residues 647-684 (SSAAGHCGTGSEREHAAPGGTAVGHSGPDTGGQGHCGH) is disordered. The segment covering 675–684 (DTGGQGHCGH) has biased composition (gly residues).

Belongs to the copper/topaquinone oxidase family. As to quaternary structure, homodimer. Cu cation serves as cofactor. Requires Zn(2+) as cofactor. The cofactor is Ca(2+). L-topaquinone is required as a cofactor. It depends on Mn(2+) as a cofactor. Topaquinone (TPQ) is generated by copper-dependent autoxidation of a specific tyrosyl residue.

It localises to the cytoplasm. It carries out the reaction a primary methyl amine + O2 + H2O = an aldehyde + H2O2 + NH4(+). The enzyme catalyses histamine + O2 + H2O = imidazole-4-acetaldehyde + H2O2 + NH4(+). Functionally, oxidizes histamine. Other amines including phenethylamine, tyramine, tryptamine, putrescine, and benzylamine also serve as substrate. The protein is Histamine oxidase of Arthrobacter globiformis.